The sequence spans 389 residues: Chromobox protein homolog 8 (389 aa).

The region spanning 11–69 (FAAEALLKRRIRKGRMEYLVKWKGWSQKYSTWEPEENILDARLLAAFEEREREMELYGP) is the Chromo domain. 2 positions are modified to phosphoserine: Ser-110 and Ser-130. The tract at residues 124–241 (LRNMGLSPPA…DDTPSGAGKF (118 aa)) is disordered. The span at 145–189 (EAPRDRDRDRDRDRERDRERERERERERERERERERGTSRVDDKP) shows a compositional bias: basic and acidic residues. Residues Ser-191, Ser-256, Ser-265, Ser-311, Ser-332, and Ser-352 each carry the phosphoserine modification. The disordered stretch occupies residues 298–327 (GALDPNGTRVRHGSGPPSSGGGLYRDMGAQ).

As to quaternary structure, component of a PRC1-like complex. Interacts with RING1 RNF2, PCGF1, PCGF2, PCGF3, BMI1, PCGF5 and PCGF6. Interacts with MLLT3 and histone H3. Interacts with PHC2.

The protein resides in the nucleus. Its function is as follows. Component of a Polycomb group (PcG) multiprotein PRC1-like complex, a complex class required to maintain the transcriptionally repressive state of many genes, including Hox genes, throughout development. PcG PRC1 complex acts via chromatin remodeling and modification of histones; it mediates monoubiquitination of histone H2A 'Lys-119', rendering chromatin heritably changed in its expressibility. This is Chromobox protein homolog 8 (CBX8) from Homo sapiens (Human).